Reading from the N-terminus, the 201-residue chain is Small ribosomal subunit protein uS4c (201 aa).

Positions 17 to 36 (ALPGLTRKTPKSGSNLKKKF) are disordered. Positions 89–157 (MRLDNILFRL…VQNYIASSDP (69 aa)) constitute an S4 RNA-binding domain.

This sequence belongs to the universal ribosomal protein uS4 family. As to quaternary structure, part of the 30S ribosomal subunit. Contacts protein S5. The interaction surface between S4 and S5 is involved in control of translational fidelity.

The protein resides in the plastid. Its subcellular location is the chloroplast. In terms of biological role, one of the primary rRNA binding proteins, it binds directly to 16S rRNA where it nucleates assembly of the body of the 30S subunit. Its function is as follows. With S5 and S12 plays an important role in translational accuracy. In Agrostis stolonifera (Creeping bentgrass), this protein is Small ribosomal subunit protein uS4c (rps4).